We begin with the raw amino-acid sequence, 524 residues long: Glutamyl-tRNA(Gln) amidotransferase subunit A, mitochondrial (524 aa).

Active-site charge relay system residues include lysine 76 and serine 171. The Acyl-ester intermediate role is filled by serine 195.

This sequence belongs to the amidase family. GatA subfamily. Subunit of the heterotrimeric GatCAB amidotransferase (AdT) complex, composed of A (qrsl1), B (gatb) and C (gatc) subunits.

It is found in the mitochondrion. It catalyses the reaction L-glutamyl-tRNA(Gln) + L-glutamine + ATP + H2O = L-glutaminyl-tRNA(Gln) + L-glutamate + ADP + phosphate + H(+). Its function is as follows. Allows the formation of correctly charged Gln-tRNA(Gln) through the transamidation of misacylated Glu-tRNA(Gln) in the mitochondria. The reaction takes place in the presence of glutamine and ATP through an activated gamma-phospho-Glu-tRNA(Gln). The polypeptide is Glutamyl-tRNA(Gln) amidotransferase subunit A, mitochondrial (qrsl1) (Xenopus tropicalis (Western clawed frog)).